The following is a 103-amino-acid chain: Pilin (103 aa).

The signal sequence occupies residues 1–30 (MYRFACRTLMLAACILATGVAGLGVGAQSA). The span at 61 to 76 (HDDFHRDSDGPDHSRD) shows a compositional bias: basic and acidic residues. Residues 61-103 (HDDFHRDSDGPDHSRDYPGPILEGPVLDDPGAAPPPPAAGGGA) are disordered. Over residues 92-103 (AAPPPPAAGGGA) the composition is skewed to pro residues.

The protein belongs to the mycobacterial pilin family. In terms of assembly, forms a homomer composed of subunits assembled in a large structure.

The protein localises to the fimbrium. Functionally, structural subunit of pili, which are thin, flexible, coiled-coil, aggregative fibers. Mediates adhesion to the extracellular matrix, an event that would facilitate direct interaction with the host epithelium during infection in the lung or other tissues. The sequence is that of Pilin (mtp) from Mycobacterium bovis (strain ATCC BAA-935 / AF2122/97).